Reading from the N-terminus, the 99-residue chain is MICOS complex subunit MIC10 (99 aa).

2 helical membrane-spanning segments follow: residues 27-43 and 50-66; these read RFVY…LLFF and WASI…SAYT.

The protein belongs to the MICOS complex subunit Mic10 family. As to quaternary structure, component of the mitochondrial contact site and cristae organizing system (MICOS) complex. The MICOS complex associates with mitochondrial outer membrane proteins. Present in a large lipid-enriched complex called mitochondrial transmembrane lipoprotein (MTL) complex made of proteins located in the two mitochondrial membranes, including the TOM complex and the core components of the MICOS complex and containing at least digalactosyldiacylglycerol (DGDG).

It localises to the mitochondrion inner membrane. Its function is as follows. Component of the MICOS complex, a large protein complex of the mitochondrial inner membrane that plays crucial roles in the maintenance of crista junctions, inner membrane architecture, and formation of contact sites to the outer membrane. The protein is MICOS complex subunit MIC10 of Arabidopsis thaliana (Mouse-ear cress).